The chain runs to 360 residues: Beta-1,3-N-acetylglucosaminyltransferase manic fringe (360 aa).

The Cytoplasmic portion of the chain corresponds to 1 to 5 (MILRR). A helical; Signal-anchor for type II membrane protein membrane pass occupies residues 6–26 (LFHVLPAFAFTLFILVLLDLQ). Topologically, residues 27 to 360 (LRTRSDQKPQ…ALSWNQHVMH (334 aa)) are lumenal. A disordered region spans residues 51–74 (TTAENQHRDGAHEKEKAEGQKWTE). Basic and acidic residues predominate over residues 55–74 (NQHRDGAHEKEKAEGQKWTE). A substrate-binding site is contributed by arginine 100. 2 cysteine pairs are disulfide-bonded: cysteine 139–cysteine 150 and cysteine 168–cysteine 231. Aspartate 172 contacts substrate. Aspartate 173 contacts Mn(2+). N-linked (GlcNAc...) asparagine glycosylation occurs at asparagine 214. Aspartate 261 is an active-site residue. Histidine 285 is a Mn(2+) binding site. Residues cysteine 335 and cysteine 344 are joined by a disulfide bond.

Belongs to the glycosyltransferase 31 family. Requires Mn(2+) as cofactor.

Its subcellular location is the golgi apparatus membrane. It catalyses the reaction 3-O-(alpha-L-fucosyl)-L-threonyl-[EGF-like domain protein] + UDP-N-acetyl-alpha-D-glucosamine = 3-O-(N-acetyl-beta-D-glucosaminyl-(1-&gt;3)-alpha-L-fucosyl)-L-threonyl-[EGF-like domain protein] + UDP + H(+). The enzyme catalyses 3-O-(alpha-L-fucosyl)-L-seryl-[EGF-like domain protein] + UDP-N-acetyl-alpha-D-glucosamine = 3-O-(N-acetyl-beta-D-glucosaminyl-(1-&gt;3)-alpha-L-fucosyl)-L-seryl-[EGF-like domain protein] + UDP + H(+). Functionally, glycosyltransferase that initiates the elongation of O-linked fucose residues attached to EGF-like repeats in the extracellular domain of Notch molecules. This chain is Beta-1,3-N-acetylglucosaminyltransferase manic fringe, found in Danio rerio (Zebrafish).